Here is a 499-residue protein sequence, read N- to C-terminus: Bifunctional purine biosynthesis protein PurH (499 aa).

Residues 1–144 (MIKRALISVF…KNFKDVVVLT (144 aa)) enclose the MGS-like domain.

This sequence belongs to the PurH family.

It carries out the reaction (6R)-10-formyltetrahydrofolate + 5-amino-1-(5-phospho-beta-D-ribosyl)imidazole-4-carboxamide = 5-formamido-1-(5-phospho-D-ribosyl)imidazole-4-carboxamide + (6S)-5,6,7,8-tetrahydrofolate. It catalyses the reaction IMP + H2O = 5-formamido-1-(5-phospho-D-ribosyl)imidazole-4-carboxamide. It functions in the pathway purine metabolism; IMP biosynthesis via de novo pathway; 5-formamido-1-(5-phospho-D-ribosyl)imidazole-4-carboxamide from 5-amino-1-(5-phospho-D-ribosyl)imidazole-4-carboxamide (10-formyl THF route): step 1/1. Its pathway is purine metabolism; IMP biosynthesis via de novo pathway; IMP from 5-formamido-1-(5-phospho-D-ribosyl)imidazole-4-carboxamide: step 1/1. The sequence is that of Bifunctional purine biosynthesis protein PurH from Clostridium botulinum (strain Loch Maree / Type A3).